A 279-amino-acid polypeptide reads, in one-letter code: Putative pyruvate, phosphate dikinase regulatory protein (279 aa).

153–160 is a binding site for ADP; the sequence is GISRTSKT.

It belongs to the pyruvate, phosphate/water dikinase regulatory protein family. PDRP subfamily.

It carries out the reaction N(tele)-phospho-L-histidyl/L-threonyl-[pyruvate, phosphate dikinase] + ADP = N(tele)-phospho-L-histidyl/O-phospho-L-threonyl-[pyruvate, phosphate dikinase] + AMP + H(+). It catalyses the reaction N(tele)-phospho-L-histidyl/O-phospho-L-threonyl-[pyruvate, phosphate dikinase] + phosphate + H(+) = N(tele)-phospho-L-histidyl/L-threonyl-[pyruvate, phosphate dikinase] + diphosphate. In terms of biological role, bifunctional serine/threonine kinase and phosphorylase involved in the regulation of the pyruvate, phosphate dikinase (PPDK) by catalyzing its phosphorylation/dephosphorylation. This is Putative pyruvate, phosphate dikinase regulatory protein from Brucella melitensis biotype 2 (strain ATCC 23457).